The primary structure comprises 70 residues: MPNQSGSNSSNQLLVPGAAQAIDQMKFEIASEFGVNLGAETTSRANGSVGGEITKRLVSFAQQQMGGGVQ.

The protein belongs to the alpha/beta-type SASP family.

In terms of biological role, SASP are bound to spore DNA. They are double-stranded DNA-binding proteins that cause DNA to change to an a-like conformation. They protect the DNA backbone from chemical and enzymatic cleavage and are thus involved in dormant spore's high resistance to UV light. This Bacillus subtilis protein is Small, acid-soluble spore protein 1.